The chain runs to 390 residues: Queuine tRNA-ribosyltransferase (390 aa).

Catalysis depends on D92, which acts as the Proton acceptor. Substrate is bound by residues 92–96 (DSGGF), D146, Q195, and G222. An RNA binding region spans residues 253–259 (GVGTPED). D272 serves as the catalytic Nucleophile. Residues 277–281 (TRNAR) form an RNA binding; important for wobble base 34 recognition region. Positions 310, 312, 315, and 354 each coordinate Zn(2+).

The protein belongs to the queuine tRNA-ribosyltransferase family. Homodimer. Within each dimer, one monomer is responsible for RNA recognition and catalysis, while the other monomer binds to the replacement base PreQ1. Zn(2+) serves as cofactor.

The catalysed reaction is 7-aminomethyl-7-carbaguanine + guanosine(34) in tRNA = 7-aminomethyl-7-carbaguanosine(34) in tRNA + guanine. It participates in tRNA modification; tRNA-queuosine biosynthesis. Its function is as follows. Catalyzes the base-exchange of a guanine (G) residue with the queuine precursor 7-aminomethyl-7-deazaguanine (PreQ1) at position 34 (anticodon wobble position) in tRNAs with GU(N) anticodons (tRNA-Asp, -Asn, -His and -Tyr). Catalysis occurs through a double-displacement mechanism. The nucleophile active site attacks the C1' of nucleotide 34 to detach the guanine base from the RNA, forming a covalent enzyme-RNA intermediate. The proton acceptor active site deprotonates the incoming PreQ1, allowing a nucleophilic attack on the C1' of the ribose to form the product. After dissociation, two additional enzymatic reactions on the tRNA convert PreQ1 to queuine (Q), resulting in the hypermodified nucleoside queuosine (7-(((4,5-cis-dihydroxy-2-cyclopenten-1-yl)amino)methyl)-7-deazaguanosine). The chain is Queuine tRNA-ribosyltransferase from Paracidovorax citrulli (strain AAC00-1) (Acidovorax citrulli).